The primary structure comprises 341 residues: Ectoine-binding periplasmic protein TeaA (341 aa).

Residues 1 to 25 (MKAYKLLTTASIGALMLGMSTAAYS) form the signal peptide. L-ectoine-binding residues include Glu34, Arg169, Asn209, Trp213, and Phe234.

Belongs to the bacterial solute-binding protein 7 family. In terms of assembly, monomer. The complex comprises the extracytoplasmic solute receptor protein TeaA, and the two transmembrane proteins TeaB and TeaC.

It is found in the periplasm. Functionally, part of the tripartite ATP-independent periplasmic (TRAP) transport system TeaABC involved in the uptake of ectoine and hydroxyectoine in response to osmotic upshock. Probably functions as a recovery system for synthesized ectoine that leaks out of the cell. Binds ectoine with high affinity. Affinity for hydroxyectoine is approximately 20-fold lower. The polypeptide is Ectoine-binding periplasmic protein TeaA (teaA) (Halomonas elongata (strain ATCC 33173 / DSM 2581 / NBRC 15536 / NCIMB 2198 / 1H9)).